An 894-amino-acid chain; its full sequence is DNA mismatch repair protein MutS (894 aa).

ATP is bound at residue 632 to 639 (GPNMGGKS).

It belongs to the DNA mismatch repair MutS family.

In terms of biological role, this protein is involved in the repair of mismatches in DNA. It is possible that it carries out the mismatch recognition step. This protein has a weak ATPase activity. The sequence is that of DNA mismatch repair protein MutS from Paraburkholderia xenovorans (strain LB400).